A 382-amino-acid polypeptide reads, in one-letter code: Gap junction alpha-1 protein (382 aa).

Residues 2-23 lie on the Cytoplasmic side of the membrane; the sequence is GDWSALGKLLDKVQAYSTAGGK. Residue serine 5 is modified to Phosphoserine. A helical transmembrane segment spans residues 24-44; the sequence is VWLSVLFIFRILLLGTAVESA. At 45-76 the chain is on the extracellular side; it reads WGDEQSAFRCNTQQPGCENVCYDKSFPISHVR. 2 disulfides stabilise this stretch: cysteine 54-cysteine 192 and cysteine 187-cysteine 198. A helical membrane pass occupies residues 77–97; that stretch reads FWVLQIIFVSVPTLLYLAHVF. Residues 98 to 155 are Cytoplasmic-facing; sequence YVMRKEEKLNKKEEELKVAQTDGANVDMHLKQIEIKKFKYGIEEHGKVKMRGGLLRTY. Residue lysine 144 forms a Glycyl lysine isopeptide (Lys-Gly) (interchain with G-Cter in SUMO) linkage. Residues 156 to 176 form a helical membrane-spanning segment; that stretch reads IISILFKSVFEVAFLLIQWYI. The Extracellular segment spans residues 177–207; the sequence is YGFSLSAVYTCKRDPCPHQVDCFLSRPTEKT. The chain crosses the membrane as a helical span at residues 208-228; the sequence is IFIIFMLVVSLVSLALNIIEL. At 229 to 382 the chain is on the cytoplasmic side; that stretch reads FYVFFKGIKD…SRPRPDDLEI (154 aa). A Glycyl lysine isopeptide (Lys-Gly) (interchain with G-Cter in SUMO) cross-link involves residue lysine 237. The interaction with NOV stretch occupies residues 244–382; that stretch reads SDLYHATTGP…SRPRPDDLEI (139 aa). Position 247 is a phosphotyrosine (tyrosine 247). Serine 255, serine 257, and serine 262 each carry phosphoserine. Residues 264–382 form an interaction with UBQLN4 region; sequence TYAYFNGCSS…SRPRPDDLEI (119 aa). At cysteine 271 the chain carries S-nitrosocysteine. At threonine 275 the chain carries Phosphothreonine. Phosphoserine occurs at positions 306 and 314. Positions 317–332 are enriched in polar residues; it reads QNRMGQAGSTISNSHA. The disordered stretch occupies residues 317-382; the sequence is QNRMGQAGST…SRPRPDDLEI (66 aa). At serine 325 the chain carries Phosphoserine; by CK1. Threonine 326 is modified (phosphothreonine). A phosphoserine; by CK1 mark is found at serine 328 and serine 330. Serine 344 and serine 365 each carry phosphoserine. Residues 362–374 show a composition bias toward low complexity; that stretch reads RPSSRASSRASSR. Serine 368 carries the post-translational modification Phosphoserine; by PKC/PRKCG and PKC/PRKCD. 2 positions are modified to phosphoserine: serine 369 and serine 373.

The protein belongs to the connexin family. Alpha-type (group II) subfamily. In terms of assembly, a connexon is composed of a hexamer of connexins. Interacts with SGSM3. Interacts with RIC1/CIP150. Interacts with CNST and CSNK1D. Interacts (via C-terminus) with TJP1. Interacts (via C-terminus) with SRC (via SH3 domain). Interacts (not ubiquitinated) with UBQLN4 (via UBA domain). Interacts with NOV. Interacts with TMEM65. Interacts with ANK3/ANKG and PKP2. In terms of processing, phosphorylation at Ser-325, Ser-328 and Ser-330 by CK1 modulates gap junction assembly. Phosphorylated at Ser-368 by PRKCG; phosphorylation induces disassembly of gap junction plaques and inhibition of gap junction activity. Phosphorylation at Ser-368 by PRKCD triggers its internalization into small vesicles leading to proteasome-mediated degradation. Post-translationally, sumoylated with SUMO1, SUMO2 and SUMO3, which may regulate the level of functional Cx43 gap junctions at the plasma membrane. May be desumoylated by SENP1 or SENP2. S-nitrosylation at Cys-271 is enriched at the muscle endothelial gap junction in arteries, it augments channel permeability and may regulate of smooth muscle cell to endothelial cell communication. In terms of processing, acetylated in the developing cortex; leading to delocalization from the cell membrane.

The protein resides in the cell membrane. It is found in the cell junction. It localises to the gap junction. Its subcellular location is the endoplasmic reticulum. In terms of biological role, gap junction protein that acts as a regulator of bladder capacity. A gap junction consists of a cluster of closely packed pairs of transmembrane channels, the connexons, through which materials of low MW diffuse from one cell to a neighboring cell. May play a critical role in the physiology of hearing by participating in the recycling of potassium to the cochlear endolymph. Negative regulator of bladder functional capacity: acts by enhancing intercellular electrical and chemical transmission, thus sensitizing bladder muscles to cholinergic neural stimuli and causing them to contract. May play a role in cell growth inhibition through the regulation of NOV expression and localization. Plays an essential role in gap junction communication in the ventricles. The protein is Gap junction alpha-1 protein (GJA1) of Erinaceus europaeus (Western European hedgehog).